Reading from the N-terminus, the 213-residue chain is Kynurenine formamidase (213 aa).

Tryptophan 18 contributes to the substrate binding site. Zn(2+) contacts are provided by histidine 48, histidine 52, and aspartate 54. Histidine 58 acts as the Proton donor/acceptor in catalysis. Histidine 160 and glutamate 172 together coordinate Zn(2+).

The protein belongs to the Cyclase 1 superfamily. KynB family. As to quaternary structure, homodimer. The cofactor is Zn(2+).

It carries out the reaction N-formyl-L-kynurenine + H2O = L-kynurenine + formate + H(+). It functions in the pathway amino-acid degradation; L-tryptophan degradation via kynurenine pathway; L-kynurenine from L-tryptophan: step 2/2. Its function is as follows. Catalyzes the hydrolysis of N-formyl-L-kynurenine to L-kynurenine, the second step in the kynurenine pathway of tryptophan degradation. In Burkholderia thailandensis (strain ATCC 700388 / DSM 13276 / CCUG 48851 / CIP 106301 / E264), this protein is Kynurenine formamidase.